A 483-amino-acid chain; its full sequence is Aspartyl/glutamyl-tRNA(Asn/Gln) amidotransferase subunit B (483 aa).

This sequence belongs to the GatB/GatE family. GatB subfamily. Heterotrimer of A, B and C subunits.

The enzyme catalyses L-glutamyl-tRNA(Gln) + L-glutamine + ATP + H2O = L-glutaminyl-tRNA(Gln) + L-glutamate + ADP + phosphate + H(+). It catalyses the reaction L-aspartyl-tRNA(Asn) + L-glutamine + ATP + H2O = L-asparaginyl-tRNA(Asn) + L-glutamate + ADP + phosphate + 2 H(+). In terms of biological role, allows the formation of correctly charged Asn-tRNA(Asn) or Gln-tRNA(Gln) through the transamidation of misacylated Asp-tRNA(Asn) or Glu-tRNA(Gln) in organisms which lack either or both of asparaginyl-tRNA or glutaminyl-tRNA synthetases. The reaction takes place in the presence of glutamine and ATP through an activated phospho-Asp-tRNA(Asn) or phospho-Glu-tRNA(Gln). The protein is Aspartyl/glutamyl-tRNA(Asn/Gln) amidotransferase subunit B of Rickettsia felis (strain ATCC VR-1525 / URRWXCal2) (Rickettsia azadi).